Reading from the N-terminus, the 225-residue chain is Uridylate kinase (225 aa).

Residue 9-10 (GS) coordinates ATP. G43 is a UMP binding site. Residues G44 and R48 each contribute to the ATP site. Residues D65 and 113 to 119 (TEPAHST) each bind UMP. Residues T139, Y145, and D148 each coordinate ATP.

This sequence belongs to the UMP kinase family. In terms of assembly, homohexamer.

Its subcellular location is the cytoplasm. It carries out the reaction UMP + ATP = UDP + ADP. Its pathway is pyrimidine metabolism; CTP biosynthesis via de novo pathway; UDP from UMP (UMPK route): step 1/1. With respect to regulation, inhibited by UTP. In terms of biological role, catalyzes the reversible phosphorylation of UMP to UDP. This is Uridylate kinase from Methanobrevibacter smithii (strain ATCC 35061 / DSM 861 / OCM 144 / PS).